Consider the following 408-residue polypeptide: Echinulin prenyltransferase 2 (408 aa).

Dimethylallyl diphosphate-binding residues include Arg94, Lys181, Tyr183, Arg248, Lys250, Tyr252, Gln334, Tyr336, Tyr400, and Tyr404.

The protein belongs to the tryptophan dimethylallyltransferase family.

The enzyme catalyses preechinulin + dimethylallyl diphosphate = tardioxopiperazine B + diphosphate. It catalyses the reaction preechinulin + dimethylallyl diphosphate = tardioxopiperazine A + diphosphate. The catalysed reaction is tardioxopiperazine A + dimethylallyl diphosphate = echinulin + diphosphate. It carries out the reaction tardioxopiperazine A + dimethylallyl diphosphate = variecolorin L + diphosphate. The enzyme catalyses neoechinulin A + dimethylallyl diphosphate = variecolorin G + diphosphate. It catalyses the reaction neoechinulin A + dimethylallyl diphosphate = isoechinulin A + diphosphate. The catalysed reaction is isoechinulin A + dimethylallyl diphosphate = dehydroechinulin + diphosphate. It carries out the reaction neoechinulin B + dimethylallyl diphosphate = isoechinulin B + diphosphate. Its pathway is secondary metabolite biosynthesis. It participates in alkaloid biosynthesis. Functionally, prenyltransferase; part of the gene cluster that mediates the biosynthesis of echinulin family alkaloid. The pathway begins with the biosynthesis of the cyclic dipeptide cyclo-L-Trp-L-Ala (cyclo-TA) by the NRPS echPS via condensation of L-alanine and L-tryptophan. The prenyltransferase echPT1 then catalyzes the first prenylation step, a reverse prenylation reaction at C2, to yield preechinulin. Preechinulin is the substrate of the cytochrome P450 monooxygenase echP450 that catalyzes the formation of the double bond between C10 and C11 to produce neoechulin A. The unique prenyltransferase echPT2 functions as a competitive enzyme with echP450 for preechinulin metabolization and uses preechinulin for effective regiospecific prenylations. Preechinulin is prenylated by echPT2 at C5 or C7. C7-prenylation leads to accumulation of tardioxopiperazine B without further modification by echPT2. In contrast, the C5-prenylated tardioxopiperazine A can be prenylated again by echPT2, predominantly at C7 to form echinulin or less frequently at C4 to give variecolorin L. EchPT2 also accepts neoechilunin A to produce varlecolorin G (prenylation at C5) or isoechinulin A (prenylation at C7). EchPT2 further converts isoechinulin A into dehydroechinulin. Moreover, a yet unidentified enzyme can also convert neoechilunin A into neoechilunin B by introducing a double bond between positions C14 and C17 and thus provides a further substrate to echPT2 for C5 and C7 prenylation. In Aspergillus ruber (Eurotium rubrum), this protein is Echinulin prenyltransferase 2.